Here is a 334-residue protein sequence, read N- to C-terminus: Protein-glutamate methylesterase FrzG (334 aa).

Positions 147–334 (PYPLVAIAAS…AALMQWVDVC (188 aa)) constitute a CheB-type methylesterase domain. Catalysis depends on residues Ser156, His183, and Asp276.

It catalyses the reaction [protein]-L-glutamate 5-O-methyl ester + H2O = L-glutamyl-[protein] + methanol + H(+). Its function is as follows. Probable methylesterase. Required for the normal aggregation of M.xanthus cells during fruiting body formation. It is also a component of a sensory transduction pathway that controls the frequency at which cells reverse their gliding direction. It may remove the methyl group from the gamma-glutamyl methyl ester residues in FrzCD. This is Protein-glutamate methylesterase FrzG (frzG) from Myxococcus xanthus.